Here is an 88-residue protein sequence, read N- to C-terminus: Auxin-responsive protein SAUR21 (88 aa).

This sequence belongs to the ARG7 family.

The protein localises to the cell membrane. In terms of biological role, functions as a positive effector of cell expansion through modulation of auxin transport. The protein is Auxin-responsive protein SAUR21 of Arabidopsis thaliana (Mouse-ear cress).